The sequence spans 299 residues: MSNSWWEITILCHPHLEESITWRLDKFGCSGTSREIKGKSYIIQAYAPQIQYQSLDISALSLWLQQDALVLNLPQPLTRWKLIDEEDWASSWKEHWEPTEVGDRFIIYPAWLTPPEQTDKLILRLDPGVAFGTGTHPTTQLCLESLEMRLSKSPENVVIADIGSGSGILSIGAILLGAKKAYAVDIDPLAVKAARENRHLNQIHPDHLVINQGSLTELLELVSDGVDGIVCNILAEVIIELIPQFSKLARPNTWGILSGILLEQSQAIADTLEQEGWIVAALWKRKQWCCFQIRKAPEN.

The S-adenosyl-L-methionine site is built by T139, G163, D185, and N232.

The protein belongs to the methyltransferase superfamily. PrmA family.

The protein resides in the cytoplasm. The catalysed reaction is L-lysyl-[protein] + 3 S-adenosyl-L-methionine = N(6),N(6),N(6)-trimethyl-L-lysyl-[protein] + 3 S-adenosyl-L-homocysteine + 3 H(+). In terms of biological role, methylates ribosomal protein L11. This Crocosphaera subtropica (strain ATCC 51142 / BH68) (Cyanothece sp. (strain ATCC 51142)) protein is Ribosomal protein L11 methyltransferase.